The chain runs to 517 residues: Argininosuccinate lyase, chloroplastic (517 aa).

The N-terminal 45 residues, 1–45, are a transit peptide targeting the chloroplast; it reads MGAIDLSFSQSLLFSSSRSNLSSSTHRSVSFLPPGSKSRCLPPLR. 2-(N(omega)-L-arginino)succinate-binding residues include serine 79, asparagine 166, and threonine 211. The Proton acceptor role is filled by histidine 212. Catalysis depends on serine 333, which acts as the Proton donor. Asparagine 341, tyrosine 373, glutamine 378, and lysine 381 together coordinate 2-(N(omega)-L-arginino)succinate.

This sequence belongs to the lyase 1 family. Argininosuccinate lyase subfamily.

It is found in the plastid. The protein localises to the chloroplast. The catalysed reaction is 2-(N(omega)-L-arginino)succinate = fumarate + L-arginine. The protein operates within amino-acid biosynthesis; L-arginine biosynthesis; L-arginine from L-ornithine and carbamoyl phosphate: step 3/3. The chain is Argininosuccinate lyase, chloroplastic from Arabidopsis thaliana (Mouse-ear cress).